The sequence spans 461 residues: ATP synthase subunit beta 2 (461 aa).

ATP is bound at residue 151–158; the sequence is GGAGVGKT.

This sequence belongs to the ATPase alpha/beta chains family. In terms of assembly, F-type ATPases have 2 components, CF(1) - the catalytic core - and CF(0) - the membrane proton channel. CF(1) has five subunits: alpha(3), beta(3), gamma(1), delta(1), epsilon(1). CF(0) has three main subunits: a(1), b(2) and c(9-12). The alpha and beta chains form an alternating ring which encloses part of the gamma chain. CF(1) is attached to CF(0) by a central stalk formed by the gamma and epsilon chains, while a peripheral stalk is formed by the delta and b chains.

It localises to the cell inner membrane. The enzyme catalyses ATP + H2O + 4 H(+)(in) = ADP + phosphate + 5 H(+)(out). Its function is as follows. Produces ATP from ADP in the presence of a proton gradient across the membrane. The catalytic sites are hosted primarily by the beta subunits. The polypeptide is ATP synthase subunit beta 2 (Pseudoalteromonas atlantica (strain T6c / ATCC BAA-1087)).